The sequence spans 550 residues: Phosphomannomutase (550 aa).

Residue Ser148 is the Phosphoserine intermediate of the active site. Residues Ser148, Asp300, Asp302, and Asp304 each contribute to the Mg(2+) site.

The protein belongs to the phosphohexose mutase family. The cofactor is Mg(2+).

It catalyses the reaction alpha-D-mannose 1-phosphate = D-mannose 6-phosphate. The chain is Phosphomannomutase (manB) from Mycoplasma genitalium (strain ATCC 33530 / DSM 19775 / NCTC 10195 / G37) (Mycoplasmoides genitalium).